A 346-amino-acid polypeptide reads, in one-letter code: MTTNTVTLQTAHIVSLGDIEEAKASIKPFIRRTPLIKSMYLSQNITKGNVYLKLENMQFTGSFKFRGASNKINHLSDEQKAKGIIGASAGNHAQGVALTAKLLGIDATIVMPETAPIAKQNATKGYGAKVILKGKNFNETRLYMEELAKENGMTIVHPYDDKFVMAGQGTIGLEILDDIWNVNTVIVPVGGGGLIAGIATALKSFNPSIHIIGVQAENVHGMAESFYKRALTEHREDSTIADGCDVKVPGEKTYEVVKHLVDEFILVSEEEIEHAMQDLMQRAKIITEGAGALPTAAILSGKIDKKWLEGKNVVALVSGGNVDLTRVSGVIEHGLNIADTSKGVVG.

F59–T60 contributes to the AMP binding site. Position 64 is an N6-(pyridoxal phosphate)lysine (K64). AMP is bound by residues Q94, G125–Y126, and N321.

Belongs to the serine/threonine dehydratase family. In the native structure, TdcB is in a dimeric form, whereas in the TdcB-AMP complex, it exists in a tetrameric form (dimer of dimers). Pyridoxal 5'-phosphate is required as a cofactor.

It carries out the reaction L-threonine = 2-oxobutanoate + NH4(+). Its pathway is amino-acid degradation; L-threonine degradation via propanoate pathway; propanoate from L-threonine: step 1/4. Its activity is regulated as follows. Each protein molecule can bind up to four molecules of AMP, which act as an allosteric activator to the enzyme. Catalyzes the anaerobic formation of alpha-ketobutyrate and ammonia from threonine in a two-step reaction. The first step involved a dehydration of threonine and a production of enamine intermediates (aminocrotonate), which tautomerizes to its imine form (iminobutyrate). Both intermediates are unstable and short-lived. The second step is the nonenzymatic hydrolysis of the enamine/imine intermediates to form 2-ketobutyrate and free ammonia. In the low water environment of the cell, the second step is accelerated by RidA. This is L-threonine dehydratase catabolic TdcB (tdcB) from Staphylococcus aureus (strain Mu50 / ATCC 700699).